Here is a 1621-residue protein sequence, read N- to C-terminus: Lysophospholipase NTE1 (1621 aa).

Topologically, residues 1-12 (MSSIPTPPDANG) are cytoplasmic. The chain crosses the membrane as a helical span at residues 13–33 (NPLIALAVAVIYAILYVLQGV). Over 34–59 (KYGVSLLTIGIPSCIVRMLQYSLTIS) the chain is Lumenal. The helical transmembrane segment at 60-80 (LGFPHLLALFAGALLALFFLI) threads the bilayer. At 81-1621 (RYRYLTRYAQ…RGNRLRRMSI (1541 aa)) the chain is on the cytoplasmic side. Disordered regions lie at residues 188–209 (PDASSQGTPTPSSDTNSPTRPS), 250–379 (EGEE…SVPR), 545–566 (QTATTTVKNEPLNGGSSPLDET), 648–667 (WNLNDSPHTDGQPVDPQRDD), 711–735 (VSALSTPNSPMFPPNAGTPLQGSTR), 772–791 (DDEASSISMSLHDSQGGASG), and 839–870 (FRSTSSNQENPNSTPGSKHRQSSFGSSNERPF). 2 stretches are compositionally biased toward low complexity: residues 195-209 (TPTPSSDTNSPTRPS) and 348-361 (RRSQSLRSSPRLNS). Residues 788 to 907 (GASG…GYLS) and 951 to 1070 (RLLS…IAGR) each bind a nucleoside 3',5'-cyclic phosphate. The span at 839 to 867 (FRSTSSNQENPNSTPGSKHRQSSFGSSNE) shows a compositional bias: polar residues. The PNPLA domain occupies 1316–1480 (LVLGGGGARG…MDNTPIQPLR (165 aa)). The short motif at 1320 to 1325 (GGGARG) is the GXGXXG element. Positions 1347-1351 (GCSIG) match the GXSXG motif. Residue S1349 is the Nucleophile of the active site. D1467 (proton acceptor) is an active-site residue. The short motif at 1467-1469 (DGG) is the DGA/G element.

It belongs to the NTE family.

The protein resides in the endoplasmic reticulum membrane. It catalyses the reaction a 1-acyl-sn-glycero-3-phosphocholine + H2O = sn-glycerol 3-phosphocholine + a fatty acid + H(+). With respect to regulation, inhibited by organophosphorus esters. In terms of biological role, intracellular phospholipase B that catalyzes the double deacylation of phosphatidylcholine (PC) to glycerophosphocholine (GroPCho). Plays an important role in membrane lipid homeostasis. Responsible for the rapid PC turnover in response to inositol, elevated temperatures, or when choline is present in the growth medium. The polypeptide is Lysophospholipase NTE1 (NTE1) (Cryptococcus neoformans var. neoformans serotype D (strain B-3501A) (Filobasidiella neoformans)).